Reading from the N-terminus, the 234-residue chain is Leucyl/phenylalanyl-tRNA--protein transferase (234 aa).

The protein belongs to the L/F-transferase family.

Its subcellular location is the cytoplasm. The catalysed reaction is N-terminal L-lysyl-[protein] + L-leucyl-tRNA(Leu) = N-terminal L-leucyl-L-lysyl-[protein] + tRNA(Leu) + H(+). It carries out the reaction N-terminal L-arginyl-[protein] + L-leucyl-tRNA(Leu) = N-terminal L-leucyl-L-arginyl-[protein] + tRNA(Leu) + H(+). It catalyses the reaction L-phenylalanyl-tRNA(Phe) + an N-terminal L-alpha-aminoacyl-[protein] = an N-terminal L-phenylalanyl-L-alpha-aminoacyl-[protein] + tRNA(Phe). Functionally, functions in the N-end rule pathway of protein degradation where it conjugates Leu, Phe and, less efficiently, Met from aminoacyl-tRNAs to the N-termini of proteins containing an N-terminal arginine or lysine. This is Leucyl/phenylalanyl-tRNA--protein transferase from Salmonella paratyphi A (strain ATCC 9150 / SARB42).